We begin with the raw amino-acid sequence, 340 residues long: NADPH dehydrogenase (340 aa).

23–26 (SPMC) lines the FMN pocket. Y28 lines the substrate pocket. FMN-binding residues include A60 and Q102. 164–167 (HGAH) contributes to the substrate binding site. FMN contacts are provided by residues R215 and 307–308 (AR).

The protein belongs to the NADH:flavin oxidoreductase/NADH oxidase family. NamA subfamily. As to quaternary structure, homotetramer. It depends on FMN as a cofactor.

It catalyses the reaction A + NADPH + H(+) = AH2 + NADP(+). Catalyzes the reduction of the double bond of an array of alpha,beta-unsaturated aldehydes and ketones. It also reduces the nitro group of nitroester and nitroaromatic compounds. It could have a role in detoxification processes. The chain is NADPH dehydrogenase from Geobacillus sp. (strain WCH70).